Reading from the N-terminus, the 618-residue chain is Glycine--tRNA ligase 2 (618 aa).

Glycine is bound at residue Glu187. Residues 219 to 221 (RNE) and 230 to 231 (RV) each bind ATP. A glycine-binding site is contributed by Glu238. 347–348 (EC) lines the ATP pocket. 466–468 (EPS) serves as a coordination point for glycine. Arg473 is a binding site for ATP.

The protein belongs to the class-II aminoacyl-tRNA synthetase family. As to quaternary structure, homodimer.

The protein localises to the cytoplasm. The catalysed reaction is tRNA(Gly) + glycine + ATP = glycyl-tRNA(Gly) + AMP + diphosphate. The enzyme catalyses 2 ATP + H(+) = P(1),P(4)-bis(5'-adenosyl) tetraphosphate + diphosphate. In terms of biological role, catalyzes the ATP-dependent ligation of glycine to the 3'-end of its cognate tRNA, via the formation of an aminoacyl-adenylate intermediate (Gly-AMP). Also produces diadenosine tetraphosphate (Ap4A), a universal pleiotropic signaling molecule needed for cell regulation pathways, by direct condensation of 2 ATPs. Thereby, may play a special role in Ap4A homeostasis. This Saccharomyces cerevisiae (strain ATCC 204508 / S288c) (Baker's yeast) protein is Glycine--tRNA ligase 2 (GRS2).